The sequence spans 173 residues: Ribosome maturation factor RimM (173 aa).

In terms of domain architecture, PRC barrel spans 92–165 (EGEFYHADLI…RVVIEAPAEI (74 aa)).

Belongs to the RimM family. In terms of assembly, binds ribosomal protein uS19.

It localises to the cytoplasm. In terms of biological role, an accessory protein needed during the final step in the assembly of 30S ribosomal subunit, possibly for assembly of the head region. Essential for efficient processing of 16S rRNA. May be needed both before and after RbfA during the maturation of 16S rRNA. It has affinity for free ribosomal 30S subunits but not for 70S ribosomes. The chain is Ribosome maturation factor RimM from Nitrobacter winogradskyi (strain ATCC 25391 / DSM 10237 / CIP 104748 / NCIMB 11846 / Nb-255).